We begin with the raw amino-acid sequence, 362 residues long: Talin rod domain-containing protein 1 (362 aa).

The interval 1–27 (MASGSAGKPTGEAASPAPGSAVGGASS) is disordered. Alanine 2 is subject to N-acetylalanine. Positions 9-27 (PTGEAASPAPGSAVGGASS) are enriched in low complexity.

In terms of assembly, may homodimerize. Interacts with F-actin. Ubiquitous.

Actin-binding protein which may have an oncogenic function and regulates cell proliferation, migration and invasion in cancer cells. This Mus musculus (Mouse) protein is Talin rod domain-containing protein 1.